We begin with the raw amino-acid sequence, 249 residues long: tRNA pseudouridine synthase A (249 aa).

The Nucleophile role is filled by aspartate 53. Residue tyrosine 111 coordinates substrate.

The protein belongs to the tRNA pseudouridine synthase TruA family. In terms of assembly, homodimer.

The catalysed reaction is uridine(38/39/40) in tRNA = pseudouridine(38/39/40) in tRNA. In terms of biological role, formation of pseudouridine at positions 38, 39 and 40 in the anticodon stem and loop of transfer RNAs. The chain is tRNA pseudouridine synthase A from Streptococcus pneumoniae (strain Taiwan19F-14).